Consider the following 671-residue polypeptide: Alpha-1,4-glucan:maltose-1-phosphate maltosyltransferase (671 aa).

Positions 252, 312, and 347 each coordinate alpha-maltose 1-phosphate. The Nucleophile role is filled by Asp382. Asn383 lines the alpha-maltose 1-phosphate pocket. Catalysis depends on Glu411, which acts as the Proton donor. 521–522 is an alpha-maltose 1-phosphate binding site; it reads KY.

It belongs to the glycosyl hydrolase 13 family. GlgE subfamily. Homodimer.

It catalyses the reaction alpha-maltose 1-phosphate + [(1-&gt;4)-alpha-D-glucosyl](n) = [(1-&gt;4)-alpha-D-glucosyl](n+2) + phosphate. In terms of biological role, maltosyltransferase that uses maltose 1-phosphate (M1P) as the sugar donor to elongate linear or branched alpha-(1-&gt;4)-glucans. Is involved in a branched alpha-glucan biosynthetic pathway from trehalose, together with TreS, Mak and GlgB. This Corynebacterium pseudotuberculosis (strain 1002) protein is Alpha-1,4-glucan:maltose-1-phosphate maltosyltransferase.